The chain runs to 143 residues: Hemoglobin subunit alpha-1 (143 aa).

Ser-2 bears the N-acetylserine mark. A Globin domain is found at 2 to 143; it reads SLSSKDKATV…LALALAEKYR (142 aa). Residue His-60 coordinates O2. Heme b is bound at residue His-89.

Belongs to the globin family. As to quaternary structure, hb 1 is a heterotetramer of two alpha-1 and two beta-1 chains. In terms of tissue distribution, red blood cells.

Involved in oxygen transport from gills to the various peripheral tissues. In Arctogadus glacialis (Arctic cod), this protein is Hemoglobin subunit alpha-1 (hba1).